We begin with the raw amino-acid sequence, 547 residues long: Membrane protein insertase YidC (547 aa).

The chain crosses the membrane as a helical span at residues 8 to 28 (LRLILAIALSFLFIALYSYFF). Residues 37 to 50 (QTTKQETTNNHTAT) are compositionally biased toward low complexity. A disordered region spans residues 37 to 62 (QTTKQETTNNHTATSPNAPNAQHFST). Residues 51–62 (SPNAPNAQHFST) are compositionally biased toward polar residues. The next 5 helical transmembrane spans lie at 325–345 (VIEY…LDYL), 348–368 (FVGN…IILY), 414–434 (GANP…FFAI), 449–469 (WILW…PLLM), and 495–515 (LLPL…VLYW).

The protein belongs to the OXA1/ALB3/YidC family. Type 1 subfamily. As to quaternary structure, interacts with the Sec translocase complex via SecD. Specifically interacts with transmembrane segments of nascent integral membrane proteins during membrane integration.

Its subcellular location is the cell inner membrane. Required for the insertion and/or proper folding and/or complex formation of integral membrane proteins into the membrane. Involved in integration of membrane proteins that insert both dependently and independently of the Sec translocase complex, as well as at least some lipoproteins. Aids folding of multispanning membrane proteins. The sequence is that of Membrane protein insertase YidC from Helicobacter pylori (strain ATCC 700392 / 26695) (Campylobacter pylori).